Reading from the N-terminus, the 310-residue chain is MAESNADVYASFGVNNAVMTGSTPTEHEQNMLSLDVAARDGDDAIVLSDEPTSHNDDPYAAGVDPFADGEDDEGRIQVRISEDGNEAGFDTDGDNSEVETEGEDVEFEPLGDTPEELSQVTEQLGQHEEGFQAMVEQAVERGLSADSVSRIYEEYEADGISEKSYAELEAAGYSRAFVDSYISGQEALVDQYVNQVVAFAGGQERFSAIHTHLEATNPAAAESLESAMMNRDLATVKAIINLAGESYTKKFGKPANRSVTKRATPVKPVARQKEGFTNQAEMIKAMSDPRYRSDSAYRQMVEQKVIDSSF.

The interval 46–102 (VLSDEPTSHNDDPYAAGVDPFADGEDDEGRIQVRISEDGNEAGFDTDGDNSEVETEG) is disordered. A compositionally biased stretch (acidic residues) spans 83–102 (DGNEAGFDTDGDNSEVETEG).

The protein belongs to the T7likevirus capsid assembly scaffolding protein family.

Scaffolding protein involved in the icosahedric procapsid assembly. Coassembles with the capsid proteins to form the procapsid, in which the scaffolding protein is found within the external shell of icosahedrally arranged capsid protein subunits. In a subsequent step the scaffolding protein molecules are released from the procapsid. Facilitates assembly by binding to gp10 hexamers but not the pentamers and locking them into a morphogenically correct conformation. This Enterobacteria phage T3 (Bacteriophage T3) protein is Capsid assembly scaffolding protein (9).